Reading from the N-terminus, the 175-residue chain is UPF0398 protein SUB1405 (175 aa).

The protein belongs to the UPF0398 family.

The polypeptide is UPF0398 protein SUB1405 (Streptococcus uberis (strain ATCC BAA-854 / 0140J)).